We begin with the raw amino-acid sequence, 230 residues long: 2,3-bisphosphoglycerate-dependent phosphoglycerate mutase (230 aa).

Residues 8 to 15 (RHGESEWN), 21 to 22 (TG), R60, 87 to 90 (ERHY), K98, 114 to 115 (RR), and 183 to 184 (GN) each bind substrate. The active-site Tele-phosphohistidine intermediate is H9. The active-site Proton donor/acceptor is E87.

It belongs to the phosphoglycerate mutase family. BPG-dependent PGAM subfamily.

It catalyses the reaction (2R)-2-phosphoglycerate = (2R)-3-phosphoglycerate. It participates in carbohydrate degradation; glycolysis; pyruvate from D-glyceraldehyde 3-phosphate: step 3/5. Its function is as follows. Catalyzes the interconversion of 2-phosphoglycerate and 3-phosphoglycerate. In Streptococcus pneumoniae (strain P1031), this protein is 2,3-bisphosphoglycerate-dependent phosphoglycerate mutase.